We begin with the raw amino-acid sequence, 297 residues long: Large ribosomal subunit protein uL3 (297 aa).

Disordered stretches follow at residues 124–143 (NQKI…PVRQ) and 258–297 (MKEK…DKGE).

The protein belongs to the universal ribosomal protein uL3 family. In terms of assembly, part of the 50S ribosomal subunit. Forms a cluster with proteins L14 and L19.

In terms of biological role, one of the primary rRNA binding proteins, it binds directly near the 3'-end of the 23S rRNA, where it nucleates assembly of the 50S subunit. The sequence is that of Large ribosomal subunit protein uL3 from Mycoplasma mobile (strain ATCC 43663 / 163K / NCTC 11711) (Mesomycoplasma mobile).